The chain runs to 491 residues: Protein nucleotidyltransferase YdiU (491 aa).

Residues glycine 94, glycine 96, arginine 97, lysine 117, aspartate 129, glycine 130, arginine 180, and arginine 187 each coordinate ATP. Catalysis depends on aspartate 256, which acts as the Proton acceptor. Mg(2+) contacts are provided by asparagine 257 and aspartate 266. ATP is bound at residue aspartate 266.

This sequence belongs to the SELO family. Mg(2+) is required as a cofactor. Requires Mn(2+) as cofactor.

The catalysed reaction is L-seryl-[protein] + ATP = 3-O-(5'-adenylyl)-L-seryl-[protein] + diphosphate. It catalyses the reaction L-threonyl-[protein] + ATP = 3-O-(5'-adenylyl)-L-threonyl-[protein] + diphosphate. The enzyme catalyses L-tyrosyl-[protein] + ATP = O-(5'-adenylyl)-L-tyrosyl-[protein] + diphosphate. It carries out the reaction L-histidyl-[protein] + UTP = N(tele)-(5'-uridylyl)-L-histidyl-[protein] + diphosphate. The catalysed reaction is L-seryl-[protein] + UTP = O-(5'-uridylyl)-L-seryl-[protein] + diphosphate. It catalyses the reaction L-tyrosyl-[protein] + UTP = O-(5'-uridylyl)-L-tyrosyl-[protein] + diphosphate. Functionally, nucleotidyltransferase involved in the post-translational modification of proteins. It can catalyze the addition of adenosine monophosphate (AMP) or uridine monophosphate (UMP) to a protein, resulting in modifications known as AMPylation and UMPylation. The protein is Protein nucleotidyltransferase YdiU of Clostridium botulinum (strain Alaska E43 / Type E3).